The sequence spans 263 residues: HTH-type transcriptional repressor NanR (263 aa).

Residues 1-22 are disordered; sequence MGLMNAFDSQTEDSSPAIGRNL. The region spanning 30 to 98 is the HTH gntR-type domain; it reads KKLSEMVEEE…NGERARVSRP (69 aa). The segment at residues 58–77 is a DNA-binding region (H-T-H motif); that stretch reads ERELMAFFNVGRPSVREALA.

This sequence belongs to the NanR family.

Transcriptional repressor that controls expression of the genes required for the catabolism of sialic acids. This Escherichia coli (strain 55989 / EAEC) protein is HTH-type transcriptional repressor NanR.